We begin with the raw amino-acid sequence, 121 residues long: Phospholipase A2 homolog ECO_00035 (121 aa).

7 disulfide bridges follow: Cys25–Cys114, Cys27–Cys43, Cys42–Cys94, Cys48–Cys121, Cys49–Cys87, Cys56–Cys80, and Cys74–Cys85. The tract at residues 104 to 116 (KKYKIYPNILCRG) is important for membrane-damaging activities in eukaryotes and bacteria; heparin-binding.

The protein belongs to the phospholipase A2 family. Group II subfamily. S49 sub-subfamily. In terms of assembly, monomer. Expressed by the venom gland.

It localises to the secreted. In terms of biological role, snake venom phospholipase A2 homolog that lacks enzymatic activity. Shows high myotoxin activities and displays edema-inducing activities. Has cytotoxic activities against HUVEC cells (LC(50)=4.9 uL) and human lung adenocarcinoma A549 cells (LC(50)=3.5 uL). This Echis coloratus (Carpet viper) protein is Phospholipase A2 homolog ECO_00035.